Consider the following 191-residue polypeptide: UPF0312 protein Sbal_3041 (191 aa).

The signal sequence occupies residues 1–22 (MKKQLLSALIGASLLAPMAASA).

It belongs to the UPF0312 family. Type 1 subfamily.

The protein resides in the periplasm. In Shewanella baltica (strain OS155 / ATCC BAA-1091), this protein is UPF0312 protein Sbal_3041.